The following is a 141-amino-acid chain: Large ribosomal subunit protein uL11 (141 aa).

Belongs to the universal ribosomal protein uL11 family. Part of the ribosomal stalk of the 50S ribosomal subunit. Interacts with L10 and the large rRNA to form the base of the stalk. L10 forms an elongated spine to which L12 dimers bind in a sequential fashion forming a multimeric L10(L12)X complex. In terms of processing, one or more lysine residues are methylated.

Its function is as follows. Forms part of the ribosomal stalk which helps the ribosome interact with GTP-bound translation factors. The sequence is that of Large ribosomal subunit protein uL11 from Alkaliphilus metalliredigens (strain QYMF).